The following is a 729-amino-acid chain: Fibroblast growth factor receptor 2 (729 aa).

Positions 1 to 21 are cleaved as a signal peptide; it reads MFSWSYLMGLVMVATATLSLA. Residues 22–285 lie on the Extracellular side of the membrane; that stretch reads RPSYNIAEDT…ELDSSSEYTE (264 aa). Residues 29–62 are disordered; it reads EDTTLEPEDANSSGDDEDDNDGSEDFTNDNNHMR. Positions 31–55 are enriched in acidic residues; that stretch reads TTLEPEDANSSGDDEDDNDGSEDFT. A glycan (N-linked (GlcNAc...) asparagine) is linked at Asn39. 2 Ig-like C2-type domains span residues 64–157 and 166–268; these read PYWT…YHLD and PILQ…AWLT. The tract at residues 71 to 88 is heparin-binding; it reads KLEKKLHAVPAANTVKFR. A disulfide bridge links Cys89 with Cys141. Asn138, Asn151, Asn175, Asn207, Asn228, Asn241, and Asn256 each carry an N-linked (GlcNAc...) asparagine glycan. Cys188 and Cys252 form a disulfide bridge. Residues 286-306 form a helical membrane-spanning segment; sequence IAIYCVGGFLITCMIGTIMVC. The Cytoplasmic portion of the chain corresponds to 307–729; that stretch reads HMKGRGKKSD…SQHTNGTIKT (423 aa). A Phosphotyrosine; by autocatalysis modification is found at Tyr374. The Protein kinase domain maps to 389 to 678; the sequence is LTLGKPLGEG…LTQTTNEEYL (290 aa). ATP contacts are provided by residues 395–403, Lys425, 473–475, and Asn479; these read LGEGCFGQV and EYA. Position 494 is a phosphotyrosine; by autocatalysis (Tyr494). Asp534 (proton acceptor) is an active-site residue. Residues Tyr564, Tyr565, and Tyr677 each carry the phosphotyrosine; by autocatalysis modification. The disordered stretch occupies residues 683–729; the sequence is PLEQYSPSYPDTRSSCSSGDDSVFSPDAMPYDPCLPKSQHTNGTIKT. A compositionally biased stretch (low complexity) spans 693-707; sequence DTRSSCSSGDDSVFS. Over residues 720–729 the composition is skewed to polar residues; that stretch reads SQHTNGTIKT.

It belongs to the protein kinase superfamily. Tyr protein kinase family. Fibroblast growth factor receptor subfamily. As to quaternary structure, monomer. Homodimer after ligand binding. Post-translationally, autophosphorylated. Binding of FGF family members together with heparan sulfate proteoglycan or heparin promotes receptor dimerization and autophosphorylation on tyrosine residues. Autophosphorylation occurs in trans between the two FGFR molecules present in the dimer. N-glycosylated in the endoplasmic reticulum. The N-glycan chains undergo further maturation to an Endo H-resistant form in the Golgi apparatus. In terms of processing, ubiquitinated. FGFR2 is rapidly ubiquitinated after autophosphorylation, leading to internalization and degradation. Subject to degradation both in lysosomes and by the proteasome.

Its subcellular location is the cell membrane. The protein resides in the golgi apparatus. The protein localises to the cytoplasmic vesicle. The enzyme catalyses L-tyrosyl-[protein] + ATP = O-phospho-L-tyrosyl-[protein] + ADP + H(+). Present in an inactive conformation in the absence of bound ligand. Ligand binding leads to dimerization and activation by autophosphorylation on tyrosine residues. In terms of biological role, tyrosine-protein kinase that acts as a cell-surface receptor for fibroblast growth factors and plays an essential role in the regulation of cell proliferation, differentiation, migration and apoptosis, and in the regulation of embryonic development. Required for normal embryonic patterning, limb bud development, lung morphogenesis, osteogenesis and skin development. Plays an essential role in the regulation of osteoblast differentiation, proliferation and apoptosis, and is required for normal skeleton development. Promotes cell proliferation in keratinocytes and immature osteoblasts, but promotes apoptosis in differentiated osteoblasts. Phosphorylates PLCG1, FRS2 and PAK4. Ligand binding leads to the activation of several signaling cascades. Activation of PLCG1 leads to the production of the cellular signaling molecules diacylglycerol and inositol 1,4,5-trisphosphate. Phosphorylation of FRS2 triggers recruitment of GRB2, GAB1, PIK3R1 and SOS1, and mediates activation of RAS, MAPK1/ERK2, MAPK3/ERK1 and the MAP kinase signaling pathway, as well as of the AKT1 signaling pathway. FGFR2 signaling is down-regulated by ubiquitination, internalization and degradation. Mutations that lead to constitutive kinase activation or impair normal FGFR2 maturation, internalization and degradation lead to aberrant signaling. Over-expressed FGFR2 promotes activation of STAT1. This chain is Fibroblast growth factor receptor 2 (FGFR2), found in Notophthalmus viridescens (Eastern newt).